Here is a 578-residue protein sequence, read N- to C-terminus: Adenine deaminase (578 aa).

It belongs to the metallo-dependent hydrolases superfamily. Adenine deaminase family. Requires Mn(2+) as cofactor.

It catalyses the reaction adenine + H2O + H(+) = hypoxanthine + NH4(+). This chain is Adenine deaminase, found in Ligilactobacillus salivarius (strain UCC118) (Lactobacillus salivarius).